A 540-amino-acid chain; its full sequence is Chaperonin GroEL 2 (540 aa).

Residues 29 to 32 (TLGP), 86 to 90 (DGTTT), Gly-413, and Asp-492 each bind ATP. A disordered region spans residues 521–540 (KPEKEKASVPGGGDMGGMDF). Over residues 530–540 (PGGGDMGGMDF) the composition is skewed to gly residues.

It belongs to the chaperonin (HSP60) family. In terms of assembly, forms a cylinder of 14 subunits composed of two heptameric rings stacked back-to-back. Interacts with the co-chaperonin GroES.

It is found in the secreted. It localises to the capsule. The protein resides in the cell surface. The protein localises to the cell wall. The enzyme catalyses ATP + H2O + a folded polypeptide = ADP + phosphate + an unfolded polypeptide.. Functionally, together with its co-chaperonin GroES, plays an essential role in assisting protein folding. The GroEL-GroES system forms a nano-cage that allows encapsulation of the non-native substrate proteins and provides a physical environment optimized to promote and accelerate protein folding. The polypeptide is Chaperonin GroEL 2 (Mycobacterium tuberculosis (strain ATCC 25177 / H37Ra)).